A 210-amino-acid chain; its full sequence is Dynein regulatory complex protein 12 (210 aa).

A disordered region spans residues 1–23 (MPPKNKEKGKKSGAQKKKKNWGA). Residues 7–20 (EKGKKSGAQKKKKN) are compositionally biased toward basic residues. Positions 49-161 (RDEARRAKAS…EAKYEEILHD (113 aa)) form a coiled coil. The interval 188 to 210 (HKEQQRQFGLTPPGSLRPPAPSL) is disordered.

The protein belongs to the DRC12 family. In terms of assembly, component of the nexin-dynein regulatory complex (N-DRC).

It is found in the cytoplasm. The protein localises to the cytoskeleton. The protein resides in the flagellum axoneme. In terms of biological role, component of the nexin-dynein regulatory complex (N-DRC), a key regulator of ciliary/flagellar motility which maintains the alignment and integrity of the distal axoneme and regulates microtubule sliding in motile axonemes. The protein is Dynein regulatory complex protein 12 of Homo sapiens (Human).